We begin with the raw amino-acid sequence, 319 residues long: Transaldolase (319 aa).

The Schiff-base intermediate with substrate role is filled by Lys131.

It belongs to the transaldolase family. Type 1 subfamily. As to quaternary structure, homodimer.

The protein localises to the cytoplasm. The enzyme catalyses D-sedoheptulose 7-phosphate + D-glyceraldehyde 3-phosphate = D-erythrose 4-phosphate + beta-D-fructose 6-phosphate. It participates in carbohydrate degradation; pentose phosphate pathway; D-glyceraldehyde 3-phosphate and beta-D-fructose 6-phosphate from D-ribose 5-phosphate and D-xylulose 5-phosphate (non-oxidative stage): step 2/3. Its function is as follows. Transaldolase is important for the balance of metabolites in the pentose-phosphate pathway. The protein is Transaldolase of Wigglesworthia glossinidia brevipalpis.